Reading from the N-terminus, the 518-residue chain is Crotonobetaine/carnitine--CoA ligase (518 aa).

Belongs to the ATP-dependent AMP-binding enzyme family.

The catalysed reaction is 4-(trimethylamino)butanoate + ATP + CoA = 4-(trimethylamino)butanoyl-CoA + AMP + diphosphate. The enzyme catalyses crotonobetaine + ATP + CoA = crotonobetainyl-CoA + AMP + diphosphate. It catalyses the reaction (R)-carnitine + ATP + CoA = (R)-carnitinyl-CoA + AMP + diphosphate. It functions in the pathway amine and polyamine metabolism; carnitine metabolism. Its function is as follows. Catalyzes the transfer of CoA to carnitine, generating the initial carnitinyl-CoA needed for the CaiB reaction cycle. Also has activity toward crotonobetaine and gamma-butyrobetaine. In Proteus sp. (strain LE138), this protein is Crotonobetaine/carnitine--CoA ligase.